Consider the following 472-residue polypeptide: Ras-GEF domain-containing family member 1B (472 aa).

Residues His-34–Ala-164 form the N-terminal Ras-GEF domain. The Ras-GEF domain occupies Asp-204–Pro-452.

As to quaternary structure, interacts with CCDC124 during cytokinesis. Interacts with Ras family proteins.

Its subcellular location is the early endosome. It localises to the late endosome. It is found in the midbody. Its function is as follows. Guanine nucleotide exchange factor (GEF) with specificity for RAP2A, it doesn't seems to activate other Ras family proteins (in vitro). This chain is Ras-GEF domain-containing family member 1B (RASGEF1B), found in Bos taurus (Bovine).